Here is a 957-residue protein sequence, read N- to C-terminus: Glycine dehydrogenase (decarboxylating) (957 aa).

An N6-(pyridoxal phosphate)lysine modification is found at Lys708.

Belongs to the GcvP family. The glycine cleavage system is composed of four proteins: P, T, L and H. Pyridoxal 5'-phosphate is required as a cofactor.

It catalyses the reaction N(6)-[(R)-lipoyl]-L-lysyl-[glycine-cleavage complex H protein] + glycine + H(+) = N(6)-[(R)-S(8)-aminomethyldihydrolipoyl]-L-lysyl-[glycine-cleavage complex H protein] + CO2. In terms of biological role, the glycine cleavage system catalyzes the degradation of glycine. The P protein binds the alpha-amino group of glycine through its pyridoxal phosphate cofactor; CO(2) is released and the remaining methylamine moiety is then transferred to the lipoamide cofactor of the H protein. The protein is Glycine dehydrogenase (decarboxylating) of Salmonella typhimurium (strain LT2 / SGSC1412 / ATCC 700720).